The chain runs to 38 residues: MTPSLANFLWSLVAGAVVLGALFGAIIFVSQRDKVRRR.

A helical transmembrane segment spans residues 8-28 (FLWSLVAGAVVLGALFGAIIF).

The protein belongs to the PsbX family. Type 1 subfamily. PSII is composed of 1 copy each of membrane proteins PsbA, PsbB, PsbC, PsbD, PsbE, PsbF, PsbH, PsbI, PsbJ, PsbK, PsbL, PsbM, PsbT, PsbX, PsbY, PsbZ, Psb30/Ycf12, peripheral proteins PsbO, CyanoQ (PsbQ), PsbU, PsbV and a large number of cofactors. It forms dimeric complexes.

Its subcellular location is the cellular thylakoid membrane. Involved in the binding and/or turnover of quinones at the Q(B) site of photosystem II (PSII). PSII is a light-driven water plastoquinone oxidoreductase, using light energy to abstract electrons from H(2)O, generating a proton gradient subsequently used for ATP formation. The sequence is that of Photosystem II reaction center protein X from Synechococcus sp. (strain JA-2-3B'a(2-13)) (Cyanobacteria bacterium Yellowstone B-Prime).